We begin with the raw amino-acid sequence, 145 residues long: 3-hydroxyacyl-[acyl-carrier-protein] dehydratase FabZ (145 aa).

Histidine 48 is a catalytic residue.

Belongs to the thioester dehydratase family. FabZ subfamily.

It is found in the cytoplasm. The enzyme catalyses a (3R)-hydroxyacyl-[ACP] = a (2E)-enoyl-[ACP] + H2O. In terms of biological role, involved in unsaturated fatty acids biosynthesis. Catalyzes the dehydration of short chain beta-hydroxyacyl-ACPs and long chain saturated and unsaturated beta-hydroxyacyl-ACPs. The polypeptide is 3-hydroxyacyl-[acyl-carrier-protein] dehydratase FabZ (Saccharophagus degradans (strain 2-40 / ATCC 43961 / DSM 17024)).